We begin with the raw amino-acid sequence, 1440 residues long: Glucose transporter type 1 (1440 aa).

The first 23 residues, 1 to 23, serve as a signal peptide directing secretion; sequence MAFLCAPGLTFFLTYSIFSAVLG. Topologically, residues 24 to 67 are cytoplasmic; sequence MLQFGYNTGVINAPEKNIENFMKDVYKDRYGEDISEEFIQQLYS. A helical membrane pass occupies residues 68-88; sequence VAVSIFAIGGMLGGFSGGWMA. The Extracellular portion of the chain corresponds to 89–95; the sequence is NRFGRKG. The helical transmembrane segment at 96–116 threads the bilayer; the sequence is GLLLNNVLGIAGACLMGFTKV. The Cytoplasmic segment spans residues 117–127; the sequence is SHSYEMLFLGR. Residues 128-148 form a helical membrane-spanning segment; sequence FIIGVNCGLNTSLVPMYISEI. The Extracellular segment spans residues 149-162; it reads APLNLRGGLGTVNQ. A D-glucose-binding site is contributed by Gln162. The chain crosses the membrane as a helical span at residues 163-183; the sequence is LAVTVGLLLSQVLGIEQILGT. At 184-186 the chain is on the cytoplasmic side; that stretch reads NEG. The chain crosses the membrane as a helical span at residues 187–207; that stretch reads WPILLGLAICPAILQLILLPV. Residues 208–272 lie on the Extracellular side of the membrane; that stretch reads CPESPRYLLI…LICSPTLRPP (65 aa). The helical transmembrane segment at 273–293 threads the bilayer; that stretch reads LIIGIVMQLSQQFSGINAVFY. Residues 283–284 and Asn289 each bind D-glucose; that span reads QQ. The Cytoplasmic portion of the chain corresponds to 294 to 310; sequence YSTSLFMSSGLTEESAK. A helical transmembrane segment spans residues 311–331; it reads FATIGIGAIMVVMTLVSIPLM. The Extracellular portion of the chain corresponds to 332–339; it reads DRTGRRTL. Residues 340-360 traverse the membrane as a helical segment; the sequence is HLYGLGGMFIFSIFITISFLI. At 361 to 372 the chain is on the cytoplasmic side; it reads KEMIDWMSYLSV. The chain crosses the membrane as a helical span at residues 373-393; it reads VATLGFVVFFAVGPGSIPWMI. D-glucose is bound at residue Trp391. The Extracellular portion of the chain corresponds to 394-405; sequence TAELFSQGPRPS. Residues 406–426 form a helical membrane-spanning segment; sequence AMAIAVLVNWMANFVVGIGFP. Over 427–429 the chain is Cytoplasmic; that stretch reads SMK. A helical membrane pass occupies residues 430–450; sequence TALENYTFLPFSVFLAIFWIF. The Extracellular segment spans residues 451-534; the sequence is TYKKVPETKN…GPYPLSDSTN (84 aa). N-linked (GlcNAc...) asparagine glycosylation is found at Asn460 and Asn480. Residues 535–555 traverse the membrane as a helical segment; sequence LLGPGSSSYGPGGVLGLAGSG. The Cytoplasmic segment spans residues 556-1440; sequence SGLGGQCYTN…RKYTDFLRKK (885 aa). Disordered regions lie at residues 628-708, 725-808, 966-987, 1000-1083, 1304-1330, and 1380-1401; these read ERFL…SRYA, QANP…HSVM, APEGSTLERQSSKGALGSSELP, FLAD…GSYH, LEGAGGGGASTTSEHSSSLPSPQPLTH, and ANSPHSQSHHSHAHTHTHGHHV. The segment covering 669–678 has biased composition (polar residues); that stretch reads PPDSASVRST. Residues 686–704 are compositionally biased toward low complexity; sequence QPQQVHHQQQQVHHQQQHQ. The segment covering 730–739 has biased composition (pro residues); the sequence is QAPPQQPAPP. The segment covering 754-789 has biased composition (basic residues); sequence CQQRKHSHSPHHSRHTSPHSHHHHSHHSRHSRRSRR. Residues 1313–1330 show a composition bias toward low complexity; sequence STTSEHSSSLPSPQPLTH.

The protein belongs to the major facilitator superfamily. Sugar transporter (TC 2.A.1.1) family. Glucose transporter subfamily.

It localises to the membrane. In terms of biological role, facilitative glucose transporter. This Drosophila melanogaster (Fruit fly) protein is Glucose transporter type 1 (Glut1).